A 628-amino-acid polypeptide reads, in one-letter code: Probable alpha-L-arabinofuranosidase A (628 aa).

Residues 1-25 (MVAFSALSGVSALSLLLCLVQHAHG) form the signal peptide. N36, N51, N74, N152, N171, N260, N359, and N493 each carry an N-linked (GlcNAc...) asparagine glycan.

The protein belongs to the glycosyl hydrolase 51 family.

It localises to the secreted. It carries out the reaction Hydrolysis of terminal non-reducing alpha-L-arabinofuranoside residues in alpha-L-arabinosides.. It participates in glycan metabolism; L-arabinan degradation. Functionally, alpha-L-arabinofuranosidase involved in the degradation of arabinoxylan, a major component of plant hemicellulose. Acts only on small linear 1,5-alpha-linked L-arabinofuranosyl oligosaccharides. This Aspergillus awamori (Black koji mold) protein is Probable alpha-L-arabinofuranosidase A (abfA).